A 335-amino-acid chain; its full sequence is Transcriptional activator NphR (335 aa).

The region spanning 231 to 329 (TRVQRVIEQN…GSSPGLYRKE (99 aa)) is the HTH araC/xylS-type domain. 2 consecutive DNA-binding regions (H-T-H motif) follow at residues 249 to 270 (SDIA…NAEG) and 296 to 319 (VADV…RSTF).

Its function is as follows. Transcriptional activator of nphA1 and nphA2 involved in the degradation of 4-nitrophenol (4-NP). This chain is Transcriptional activator NphR (nphR), found in Rhodococcus sp.